The primary structure comprises 227 residues: Enolase-phosphatase E1 (227 aa).

Mg(2+) is bound by residues aspartate 11 and glutamate 13. Residues 118–119 (SS) and lysine 161 each bind substrate. Residue aspartate 186 coordinates Mg(2+).

It belongs to the HAD-like hydrolase superfamily. MasA/MtnC family. As to quaternary structure, monomer. Mg(2+) is required as a cofactor.

The protein localises to the cytoplasm. It is found in the nucleus. The catalysed reaction is 5-methylsulfanyl-2,3-dioxopentyl phosphate + H2O = 1,2-dihydroxy-5-(methylsulfanyl)pent-1-en-3-one + phosphate. It functions in the pathway amino-acid biosynthesis; L-methionine biosynthesis via salvage pathway; L-methionine from S-methyl-5-thio-alpha-D-ribose 1-phosphate: step 3/6. The protein operates within amino-acid biosynthesis; L-methionine biosynthesis via salvage pathway; L-methionine from S-methyl-5-thio-alpha-D-ribose 1-phosphate: step 4/6. Its function is as follows. Bifunctional enzyme that catalyzes the enolization of 2,3-diketo-5-methylthiopentyl-1-phosphate (DK-MTP-1-P) into the intermediate 2-hydroxy-3-keto-5-methylthiopentenyl-1-phosphate (HK-MTPenyl-1-P), which is then dephosphorylated to form the acireductone 1,2-dihydroxy-3-keto-5-methylthiopentene (DHK-MTPene). The sequence is that of Enolase-phosphatase E1 from Saccharomyces cerevisiae (strain JAY291) (Baker's yeast).